A 733-amino-acid chain; its full sequence is Polyribonucleotide nucleotidyltransferase (733 aa).

Residues 404 to 424 are disordered; that stretch reads NYNMPPYSTGETGRVGSPKRR. D516 and D522 together coordinate Mg(2+). The KH domain occupies 582 to 641; sequence PRIITVHIPVDKIGEVIGPKGKMINQIQDDTGANISIEDDGTIFIGADNGDSAESARSMI. Residues 653–725 enclose the S1 motif domain; the sequence is GERYLGTVVK…DRGKLSLVLA (73 aa).

The protein belongs to the polyribonucleotide nucleotidyltransferase family. The cofactor is Mg(2+).

The protein localises to the cytoplasm. The enzyme catalyses RNA(n+1) + phosphate = RNA(n) + a ribonucleoside 5'-diphosphate. Functionally, involved in mRNA degradation. Catalyzes the phosphorolysis of single-stranded polyribonucleotides processively in the 3'- to 5'-direction. The polypeptide is Polyribonucleotide nucleotidyltransferase (Cutibacterium acnes (strain DSM 16379 / KPA171202) (Propionibacterium acnes)).